The primary structure comprises 208 residues: MGISRDNWHKRRKTGGKRKPYHKKRKYEPGRPAANTKIGPRRIHTVRVRGGNKKYRALRLDAGNFSWGSECCTRKTRIIDVVYNASNNELVRTKTLVKNCILLVDSTPFRQWFEAHYALPLGRKKGAKLTPEEEEILNKKRSKKTQKKYEERKKTAKISPLLEEQFQQGKLLACIASRPGQCGRADGYVLEGKELEFYLRKIKAKKGK.

A disordered region spans residues 1–37 (MGISRDNWHKRRKTGGKRKPYHKKRKYEPGRPAANTK). The span at 8–26 (WHKRRKTGGKRKPYHKKRK) shows a compositional bias: basic residues.

This sequence belongs to the eukaryotic ribosomal protein eS8 family. As to quaternary structure, component of the small ribosomal subunit. Identified in a IGF2BP1-dependent mRNP granule complex containing untranslated mRNAs. Part of the small subunit (SSU) processome, composed of more than 70 proteins and the RNA chaperone small nucleolar RNA (snoRNA) U3.

It is found in the cytoplasm. Its subcellular location is the membrane. The protein resides in the nucleus. It localises to the nucleolus. In terms of biological role, component of the small ribosomal subunit. The ribosome is a large ribonucleoprotein complex responsible for the synthesis of proteins in the cell. Part of the small subunit (SSU) processome, first precursor of the small eukaryotic ribosomal subunit. During the assembly of the SSU processome in the nucleolus, many ribosome biogenesis factors, an RNA chaperone and ribosomal proteins associate with the nascent pre-rRNA and work in concert to generate RNA folding, modifications, rearrangements and cleavage as well as targeted degradation of pre-ribosomal RNA by the RNA exosome. The sequence is that of Small ribosomal subunit protein eS8 (rps8) from Xenopus laevis (African clawed frog).